A 543-amino-acid polypeptide reads, in one-letter code: uncharacterized protein (543 aa).

The TRAM domain occupies 1 to 59; it reads MLKKNDIVEVEIVDLTHEGAGVAKVDGLVFFVENALPSEKILMRVLKVNKKIGFGKVEK. The S-adenosyl-L-methionine site is built by Q283, Y312, E333, and D381. Residue C408 is the Nucleophile of the active site.

The protein belongs to the class I-like SAM-binding methyltransferase superfamily. RNA M5U methyltransferase family.

This is an uncharacterized protein from Streptococcus pneumoniae serotype 4 (strain ATCC BAA-334 / TIGR4).